We begin with the raw amino-acid sequence, 127 residues long: Auxin-responsive protein SAUR76 (127 aa).

The disordered stretch occupies residues 20 to 40; sequence SFNTKPNQPPAQTNHSRSSAV.

Belongs to the ARG7 family. Expressed in cotyledons, hypocotyls and roots of young seedlings. Expressed in emerging lateral root, leaves, flowers, stamens and filaments.

The protein localises to the nucleus. Its subcellular location is the cytoplasm. It localises to the cell membrane. Its function is as follows. May be involved in the regulation of ethylene receptor signaling. Promotes cell expansion and plant growth. Involved in the regulation of cell elongation. The chain is Auxin-responsive protein SAUR76 from Arabidopsis thaliana (Mouse-ear cress).